We begin with the raw amino-acid sequence, 957 residues long: Glycine dehydrogenase (decarboxylating) (957 aa).

N6-(pyridoxal phosphate)lysine is present on Lys-708.

This sequence belongs to the GcvP family. The glycine cleavage system is composed of four proteins: P, T, L and H. Pyridoxal 5'-phosphate serves as cofactor.

The catalysed reaction is N(6)-[(R)-lipoyl]-L-lysyl-[glycine-cleavage complex H protein] + glycine + H(+) = N(6)-[(R)-S(8)-aminomethyldihydrolipoyl]-L-lysyl-[glycine-cleavage complex H protein] + CO2. Functionally, the glycine cleavage system catalyzes the degradation of glycine. The P protein binds the alpha-amino group of glycine through its pyridoxal phosphate cofactor; CO(2) is released and the remaining methylamine moiety is then transferred to the lipoamide cofactor of the H protein. In Klebsiella pneumoniae subsp. pneumoniae (strain ATCC 700721 / MGH 78578), this protein is Glycine dehydrogenase (decarboxylating).